A 63-amino-acid chain; its full sequence is Large ribosomal subunit protein bL32 (63 aa).

The segment at 1 to 23 is disordered; it reads MATPKAKVSKSRRDKRRAQFTAR. Over residues 7–18 the composition is skewed to basic residues; that stretch reads KVSKSRRDKRRA.

This sequence belongs to the bacterial ribosomal protein bL32 family.

This is Large ribosomal subunit protein bL32 from Chlorobium phaeobacteroides (strain BS1).